We begin with the raw amino-acid sequence, 880 residues long: Probable LRR receptor-like serine/threonine-protein kinase At2g28960 (880 aa).

The N-terminal stretch at 1–24 (MEGRRQRLLVFIFGALAITHLVQA) is a signal peptide. Over 25 to 511 (QPPDQRGFIS…NNNNQTYIVP (487 aa)) the chain is Extracellular. Asparagine 180, asparagine 201, asparagine 228, asparagine 254, asparagine 287, asparagine 403, asparagine 430, and asparagine 441 each carry an N-linked (GlcNAc...) asparagine glycan. LRR repeat units follow at residues 409–430 (RIIS…AFQN), 433–455 (ELRK…LASM), and 457–476 (SLSI…PKLL). Asparagine 505 carries an N-linked (GlcNAc...) asparagine glycan. Residues 512 to 532 (VVASVASVLIIIAVLILILVF) form a helical membrane-spanning segment. The Cytoplasmic segment spans residues 533–880 (KKRRPTQVDS…FTTEINPKAR (348 aa)). Threonine 564 is modified (phosphothreonine). Positions 573-846 (DNFERVLGEG…QVTNELKQCL (274 aa)) constitute a Protein kinase domain. Residues 579–587 (LGEGGFGVV) and lysine 601 contribute to the ATP site. Tyrosine 646 is modified (phosphotyrosine). Catalysis depends on aspartate 698, which acts as the Proton acceptor. Serine 732 is subject to Phosphoserine. Phosphothreonine is present on residues threonine 733 and threonine 738. Tyrosine 746 bears the Phosphotyrosine mark. The segment at 854-880 (GVREDMGSRSSVEMSTSFTTEINPKAR) is disordered. Positions 861–880 (SRSSVEMSTSFTTEINPKAR) are enriched in polar residues.

It belongs to the protein kinase superfamily. Ser/Thr protein kinase family.

It localises to the membrane. It catalyses the reaction L-seryl-[protein] + ATP = O-phospho-L-seryl-[protein] + ADP + H(+). The catalysed reaction is L-threonyl-[protein] + ATP = O-phospho-L-threonyl-[protein] + ADP + H(+). The sequence is that of Probable LRR receptor-like serine/threonine-protein kinase At2g28960 from Arabidopsis thaliana (Mouse-ear cress).